The following is a 215-amino-acid chain: Thiamine-phosphate synthase (215 aa).

4-amino-2-methyl-5-(diphosphooxymethyl)pyrimidine is bound by residues 40–44 (QLRIK) and N72. 2 residues coordinate Mg(2+): D73 and D92. S111 is a binding site for 4-amino-2-methyl-5-(diphosphooxymethyl)pyrimidine. 137-139 (TTT) is a binding site for 2-[(2R,5Z)-2-carboxy-4-methylthiazol-5(2H)-ylidene]ethyl phosphate. K140 provides a ligand contact to 4-amino-2-methyl-5-(diphosphooxymethyl)pyrimidine. Residues G169 and 189–190 (VS) contribute to the 2-[(2R,5Z)-2-carboxy-4-methylthiazol-5(2H)-ylidene]ethyl phosphate site.

The protein belongs to the thiamine-phosphate synthase family. The cofactor is Mg(2+).

The enzyme catalyses 2-[(2R,5Z)-2-carboxy-4-methylthiazol-5(2H)-ylidene]ethyl phosphate + 4-amino-2-methyl-5-(diphosphooxymethyl)pyrimidine + 2 H(+) = thiamine phosphate + CO2 + diphosphate. The catalysed reaction is 2-(2-carboxy-4-methylthiazol-5-yl)ethyl phosphate + 4-amino-2-methyl-5-(diphosphooxymethyl)pyrimidine + 2 H(+) = thiamine phosphate + CO2 + diphosphate. It catalyses the reaction 4-methyl-5-(2-phosphooxyethyl)-thiazole + 4-amino-2-methyl-5-(diphosphooxymethyl)pyrimidine + H(+) = thiamine phosphate + diphosphate. It participates in cofactor biosynthesis; thiamine diphosphate biosynthesis; thiamine phosphate from 4-amino-2-methyl-5-diphosphomethylpyrimidine and 4-methyl-5-(2-phosphoethyl)-thiazole: step 1/1. Its function is as follows. Condenses 4-methyl-5-(beta-hydroxyethyl)thiazole monophosphate (THZ-P) and 2-methyl-4-amino-5-hydroxymethyl pyrimidine pyrophosphate (HMP-PP) to form thiamine monophosphate (TMP). This Proteus mirabilis (strain HI4320) protein is Thiamine-phosphate synthase.